The primary structure comprises 569 residues: Sulfite reductase [NADPH] hemoprotein beta-component (569 aa).

Cysteine 433, cysteine 439, cysteine 478, and cysteine 482 together coordinate [4Fe-4S] cluster. Cysteine 482 is a binding site for siroheme.

This sequence belongs to the nitrite and sulfite reductase 4Fe-4S domain family. In terms of assembly, alpha(8)-beta(8). The alpha component is a flavoprotein, the beta component is a hemoprotein. Siroheme is required as a cofactor. [4Fe-4S] cluster serves as cofactor.

It carries out the reaction hydrogen sulfide + 3 NADP(+) + 3 H2O = sulfite + 3 NADPH + 4 H(+). It functions in the pathway sulfur metabolism; hydrogen sulfide biosynthesis; hydrogen sulfide from sulfite (NADPH route): step 1/1. Its function is as follows. Component of the sulfite reductase complex that catalyzes the 6-electron reduction of sulfite to sulfide. This is one of several activities required for the biosynthesis of L-cysteine from sulfate. In Pseudoalteromonas atlantica (strain T6c / ATCC BAA-1087), this protein is Sulfite reductase [NADPH] hemoprotein beta-component.